The sequence spans 165 residues: Large ribosomal subunit protein uL11 (165 aa).

S38 bears the Phosphoserine mark. A Glycyl lysine isopeptide (Lys-Gly) (interchain with G-Cter in SUMO2) cross-link involves residue K40. Residue K48 forms a Glycyl lysine isopeptide (Lys-Gly) (interchain with G-Cter in ubiquitin) linkage. K54 carries the post-translational modification N6-acetyllysine. K83 is covalently cross-linked (Glycyl lysine isopeptide (Lys-Gly) (interchain with G-Cter in ubiquitin)). A Phosphoserine modification is found at S165.

It belongs to the universal ribosomal protein uL11 family. Component of the large ribosomal subunit. Mature ribosomes consist of a small (40S) and a large (60S) subunit. The 40S subunit contains about 33 different proteins and 1 molecule of RNA (18S). The 60S subunit contains about 49 different proteins and 3 molecules of RNA (28S, 5.8S and 5S). Ubiquitinated at Lys-48 and Lys-83 by RNF14 and RNF25 in response to ribosome collisions (ribosome stalling).

The protein resides in the cytoplasm. In terms of biological role, component of the large ribosomal subunit. The ribosome is a large ribonucleoprotein complex responsible for the synthesis of proteins in the cell. Binds directly to 26S ribosomal RNA. This is Large ribosomal subunit protein uL11 (Rpl12) from Rattus norvegicus (Rat).